We begin with the raw amino-acid sequence, 240 residues long: Thiamine-phosphate synthase (240 aa).

4-amino-2-methyl-5-(diphosphooxymethyl)pyrimidine-binding positions include 63 to 67 and Asn94; that span reads QYREK. Mg(2+) contacts are provided by Asp95 and Asp114. Thr133 is a binding site for 4-amino-2-methyl-5-(diphosphooxymethyl)pyrimidine. 159–161 is a binding site for 2-[(2R,5Z)-2-carboxy-4-methylthiazol-5(2H)-ylidene]ethyl phosphate; it reads TFT. Lys162 contributes to the 4-amino-2-methyl-5-(diphosphooxymethyl)pyrimidine binding site. Residues Gly190 and 210-211 contribute to the 2-[(2R,5Z)-2-carboxy-4-methylthiazol-5(2H)-ylidene]ethyl phosphate site; that span reads IS.

This sequence belongs to the thiamine-phosphate synthase family. Mg(2+) serves as cofactor.

The enzyme catalyses 2-[(2R,5Z)-2-carboxy-4-methylthiazol-5(2H)-ylidene]ethyl phosphate + 4-amino-2-methyl-5-(diphosphooxymethyl)pyrimidine + 2 H(+) = thiamine phosphate + CO2 + diphosphate. It catalyses the reaction 2-(2-carboxy-4-methylthiazol-5-yl)ethyl phosphate + 4-amino-2-methyl-5-(diphosphooxymethyl)pyrimidine + 2 H(+) = thiamine phosphate + CO2 + diphosphate. It carries out the reaction 4-methyl-5-(2-phosphooxyethyl)-thiazole + 4-amino-2-methyl-5-(diphosphooxymethyl)pyrimidine + H(+) = thiamine phosphate + diphosphate. It participates in cofactor biosynthesis; thiamine diphosphate biosynthesis; thiamine phosphate from 4-amino-2-methyl-5-diphosphomethylpyrimidine and 4-methyl-5-(2-phosphoethyl)-thiazole: step 1/1. Functionally, condenses 4-methyl-5-(beta-hydroxyethyl)thiazole monophosphate (THZ-P) and 2-methyl-4-amino-5-hydroxymethyl pyrimidine pyrophosphate (HMP-PP) to form thiamine monophosphate (TMP). This Methanosarcina mazei (strain ATCC BAA-159 / DSM 3647 / Goe1 / Go1 / JCM 11833 / OCM 88) (Methanosarcina frisia) protein is Thiamine-phosphate synthase.